The chain runs to 506 residues: F-box protein At4g02760 (506 aa).

An F-box domain is found at 115 to 161 (TSWPLLPELTIKVFSMLDTKSLMQASACCTMFNKCAMDRVCYSHIDL). The segment at 452–506 (TFVAEFRSPSPSESDVRSPSPSSSSDSSSSSDSSSSSSSGESSDESGTEEEEDED) is disordered. The segment covering 459-492 (SPSPSESDVRSPSPSSSSDSSSSSDSSSSSSSGE) has biased composition (low complexity). The segment covering 493–506 (SSDESGTEEEEDED) has biased composition (acidic residues).

The polypeptide is F-box protein At4g02760 (Arabidopsis thaliana (Mouse-ear cress)).